A 146-amino-acid polypeptide reads, in one-letter code: 3-hydroxyacyl-[acyl-carrier-protein] dehydratase FabZ (146 aa).

Histidine 49 is an active-site residue.

Belongs to the thioester dehydratase family. FabZ subfamily.

Its subcellular location is the cytoplasm. It carries out the reaction a (3R)-hydroxyacyl-[ACP] = a (2E)-enoyl-[ACP] + H2O. Functionally, involved in unsaturated fatty acids biosynthesis. Catalyzes the dehydration of short chain beta-hydroxyacyl-ACPs and long chain saturated and unsaturated beta-hydroxyacyl-ACPs. The sequence is that of 3-hydroxyacyl-[acyl-carrier-protein] dehydratase FabZ from Psychrobacter arcticus (strain DSM 17307 / VKM B-2377 / 273-4).